Consider the following 456-residue polypeptide: Phytase A (456 aa).

An N-terminal signal peptide occupies residues 1–24 (MSSMASVLFAALAISGVQVTPSRG). 1D-myo-inositol hexakisphosphate-binding residues include Gln37, Tyr38, Arg68, His69, Arg72, Thr75, and Arg152. 4 cysteine pairs are disulfide-bonded: Cys58-Cys396, Cys197-Cys450, Cys246-Cys264, and Cys421-Cys429. The active-site Nucleophile is the His69. Residue Lys283 coordinates 1D-myo-inositol hexakisphosphate. Asn317 is a glycosylation site (N-linked (GlcNAc...) asparagine). The 1D-myo-inositol hexakisphosphate site is built by His343 and Asp344. A glycan (N-linked (GlcNAc...) asparagine) is linked at Asn358.

It belongs to the histidine acid phosphatase family. In terms of assembly, monomer.

The protein localises to the secreted. The enzyme catalyses 1D-myo-inositol hexakisphosphate + H2O = 1D-myo-inositol 1,2,4,5,6-pentakisphosphate + phosphate. It catalyses the reaction 1D-myo-inositol 1,2,4,5,6-pentakisphosphate + H2O = 1D-myo-inositol 1,2,5,6-tetrakisphosphate + phosphate. The catalysed reaction is 1D-myo-inositol 1,2,5,6-tetrakisphosphate + H2O = 1D-myo-inositol 1,2,6-trisphosphate + phosphate. It carries out the reaction 1D-myo-inositol 1,2,6-trisphosphate + H2O = 1D-myo-inositol 1,2-bisphosphate + phosphate. The enzyme catalyses 1D-myo-inositol 1,2-bisphosphate + H2O = 1D-myo-inositol 2-phosphate + phosphate. Its function is as follows. Catalyzes the phosphate monoester hydrolysis of phytic acid (myo-inositol hexakisphosphate), which results in the stepwise formation of myo-inositol pentakis-, tetrakis-, tris-, bis-, and monophosphates, as well as the liberation of inorganic phosphate. Myo-inositol 2-monophosphate is the end product. This Arthroderma benhamiae (strain ATCC MYA-4681 / CBS 112371) (Trichophyton mentagrophytes) protein is Phytase A.